Here is an 88-residue protein sequence, read N- to C-terminus: Acylphosphatase (88 aa).

Residues 3–88 (RLVALVKGRV…EAGLKGFHVY (86 aa)) form the Acylphosphatase-like domain. Active-site residues include arginine 18 and asparagine 36.

This sequence belongs to the acylphosphatase family.

It carries out the reaction an acyl phosphate + H2O = a carboxylate + phosphate + H(+). This is Acylphosphatase (acyP) from Thermus thermophilus (strain ATCC BAA-163 / DSM 7039 / HB27).